Consider the following 110-residue polypeptide: Integration host factor subunit alpha (110 aa).

It belongs to the bacterial histone-like protein family. Heterodimer of an alpha and a beta chain.

In terms of biological role, this protein is one of the two subunits of integration host factor, a specific DNA-binding protein that functions in genetic recombination as well as in transcriptional and translational control. This is Integration host factor subunit alpha from Nitrobacter hamburgensis (strain DSM 10229 / NCIMB 13809 / X14).